Here is a 612-residue protein sequence, read N- to C-terminus: Dihydroxy-acid dehydratase (612 aa).

Aspartate 81 is a binding site for Mg(2+). Cysteine 122 lines the [2Fe-2S] cluster pocket. Residues aspartate 123 and lysine 124 each coordinate Mg(2+). An N6-carboxylysine modification is found at lysine 124. Residue cysteine 196 participates in [2Fe-2S] cluster binding. Glutamate 492 serves as a coordination point for Mg(2+). Serine 518 serves as the catalytic Proton acceptor.

This sequence belongs to the IlvD/Edd family. Homodimer. [2Fe-2S] cluster is required as a cofactor. Requires Mg(2+) as cofactor.

It catalyses the reaction (2R)-2,3-dihydroxy-3-methylbutanoate = 3-methyl-2-oxobutanoate + H2O. It carries out the reaction (2R,3R)-2,3-dihydroxy-3-methylpentanoate = (S)-3-methyl-2-oxopentanoate + H2O. Its pathway is amino-acid biosynthesis; L-isoleucine biosynthesis; L-isoleucine from 2-oxobutanoate: step 3/4. It functions in the pathway amino-acid biosynthesis; L-valine biosynthesis; L-valine from pyruvate: step 3/4. Functionally, functions in the biosynthesis of branched-chain amino acids. Catalyzes the dehydration of (2R,3R)-2,3-dihydroxy-3-methylpentanoate (2,3-dihydroxy-3-methylvalerate) into 2-oxo-3-methylpentanoate (2-oxo-3-methylvalerate) and of (2R)-2,3-dihydroxy-3-methylbutanoate (2,3-dihydroxyisovalerate) into 2-oxo-3-methylbutanoate (2-oxoisovalerate), the penultimate precursor to L-isoleucine and L-valine, respectively. This is Dihydroxy-acid dehydratase from Paracoccus denitrificans (strain Pd 1222).